The chain runs to 510 residues: 2,3-bisphosphoglycerate-independent phosphoglycerate mutase (510 aa).

Aspartate 12 lines the Mn(2+) pocket. A Phosphotyrosine modification is found at tyrosine 36. Serine 62 provides a ligand contact to Mn(2+). The active-site Phosphoserine intermediate is the serine 62. Substrate is bound by residues histidine 123, 153–154, arginine 185, arginine 191, 261–264, and lysine 336; these read RD and RPDR. Aspartate 403, histidine 407, aspartate 444, histidine 445, and histidine 462 together coordinate Mn(2+).

It belongs to the BPG-independent phosphoglycerate mutase family. In terms of assembly, monomer. It depends on Mn(2+) as a cofactor.

The catalysed reaction is (2R)-2-phosphoglycerate = (2R)-3-phosphoglycerate. It participates in carbohydrate degradation; glycolysis; pyruvate from D-glyceraldehyde 3-phosphate: step 3/5. In terms of biological role, essential for rapid growth and for sporulation. Catalyzes the interconversion of 2-phosphoglycerate and 3-phosphoglycerate. The chain is 2,3-bisphosphoglycerate-independent phosphoglycerate mutase from Shouchella clausii (strain KSM-K16) (Alkalihalobacillus clausii).